A 79-amino-acid polypeptide reads, in one-letter code: Acyl carrier protein (79 aa).

The 76-residue stretch at 2–77 folds into the Carrier domain; sequence ENIEQRVKKI…QAIDYVTAHL (76 aa). Residue Ser-37 is modified to O-(pantetheine 4'-phosphoryl)serine.

It belongs to the acyl carrier protein (ACP) family. 4'-phosphopantetheine is transferred from CoA to a specific serine of apo-ACP by AcpS. This modification is essential for activity because fatty acids are bound in thioester linkage to the sulfhydryl of the prosthetic group.

The protein localises to the cytoplasm. It functions in the pathway lipid metabolism; fatty acid biosynthesis. Its function is as follows. Carrier of the growing fatty acid chain in fatty acid biosynthesis. This Laribacter hongkongensis (strain HLHK9) protein is Acyl carrier protein.